Consider the following 351-residue polypeptide: Holliday junction branch migration complex subunit RuvB (351 aa).

The tract at residues 4 to 199 (DNPQFNQWYE…FGIINSLQYY (196 aa)) is large ATPase domain (RuvB-L). ATP is bound by residues Leu38, Arg39, Gly80, Lys83, Thr84, Thr85, 146–148 (EDY), Arg189, Tyr199, and Arg236. Residue Thr84 coordinates Mg(2+). The tract at residues 200–270 (TPEELQQIVV…IVTIGLDKLR (71 aa)) is small ATPAse domain (RuvB-S). The head domain (RuvB-H) stretch occupies residues 273–351 (NRGLDETDHK…HLGHAYQRKL (79 aa)). DNA contacts are provided by Arg328 and Arg333.

Belongs to the RuvB family. Homohexamer. Forms an RuvA(8)-RuvB(12)-Holliday junction (HJ) complex. HJ DNA is sandwiched between 2 RuvA tetramers; dsDNA enters through RuvA and exits via RuvB. An RuvB hexamer assembles on each DNA strand where it exits the tetramer. Each RuvB hexamer is contacted by two RuvA subunits (via domain III) on 2 adjacent RuvB subunits; this complex drives branch migration. In the full resolvosome a probable DNA-RuvA(4)-RuvB(12)-RuvC(2) complex forms which resolves the HJ.

It localises to the cytoplasm. The enzyme catalyses ATP + H2O = ADP + phosphate + H(+). In terms of biological role, the RuvA-RuvB-RuvC complex processes Holliday junction (HJ) DNA during genetic recombination and DNA repair, while the RuvA-RuvB complex plays an important role in the rescue of blocked DNA replication forks via replication fork reversal (RFR). RuvA specifically binds to HJ cruciform DNA, conferring on it an open structure. The RuvB hexamer acts as an ATP-dependent pump, pulling dsDNA into and through the RuvAB complex. RuvB forms 2 homohexamers on either side of HJ DNA bound by 1 or 2 RuvA tetramers; 4 subunits per hexamer contact DNA at a time. Coordinated motions by a converter formed by DNA-disengaged RuvB subunits stimulates ATP hydrolysis and nucleotide exchange. Immobilization of the converter enables RuvB to convert the ATP-contained energy into a lever motion, pulling 2 nucleotides of DNA out of the RuvA tetramer per ATP hydrolyzed, thus driving DNA branch migration. The RuvB motors rotate together with the DNA substrate, which together with the progressing nucleotide cycle form the mechanistic basis for DNA recombination by continuous HJ branch migration. Branch migration allows RuvC to scan DNA until it finds its consensus sequence, where it cleaves and resolves cruciform DNA. This is Holliday junction branch migration complex subunit RuvB from Leuconostoc mesenteroides subsp. mesenteroides (strain ATCC 8293 / DSM 20343 / BCRC 11652 / CCM 1803 / JCM 6124 / NCDO 523 / NBRC 100496 / NCIMB 8023 / NCTC 12954 / NRRL B-1118 / 37Y).